A 111-amino-acid chain; its full sequence is Large ribosomal subunit protein uL22 (111 aa).

This sequence belongs to the universal ribosomal protein uL22 family. In terms of assembly, part of the 50S ribosomal subunit.

This protein binds specifically to 23S rRNA; its binding is stimulated by other ribosomal proteins, e.g. L4, L17, and L20. It is important during the early stages of 50S assembly. It makes multiple contacts with different domains of the 23S rRNA in the assembled 50S subunit and ribosome. Its function is as follows. The globular domain of the protein is located near the polypeptide exit tunnel on the outside of the subunit, while an extended beta-hairpin is found that lines the wall of the exit tunnel in the center of the 70S ribosome. This chain is Large ribosomal subunit protein uL22, found in Xylella fastidiosa (strain M23).